The sequence spans 348 residues: 3-isopropylmalate dehydrogenase (348 aa).

Position 76–87 (76–87) interacts with NAD(+); the sequence is GPKWTDPNNRPE. Substrate-binding residues include R94, R104, R132, and D217. Mg(2+) is bound by residues D217, D241, and D245. 275 to 287 provides a ligand contact to NAD(+); the sequence is GSAPDIAGKNVAN.

This sequence belongs to the isocitrate and isopropylmalate dehydrogenases family. LeuB type 1 subfamily. In terms of assembly, homodimer. Requires Mg(2+) as cofactor. Mn(2+) serves as cofactor.

Its subcellular location is the cytoplasm. The enzyme catalyses (2R,3S)-3-isopropylmalate + NAD(+) = 4-methyl-2-oxopentanoate + CO2 + NADH. It functions in the pathway amino-acid biosynthesis; L-leucine biosynthesis; L-leucine from 3-methyl-2-oxobutanoate: step 3/4. In terms of biological role, catalyzes the oxidation of 3-carboxy-2-hydroxy-4-methylpentanoate (3-isopropylmalate) to 3-carboxy-4-methyl-2-oxopentanoate. The product decarboxylates to 4-methyl-2 oxopentanoate. The sequence is that of 3-isopropylmalate dehydrogenase from Staphylococcus aureus (strain Mu50 / ATCC 700699).